The primary structure comprises 320 residues: Cytochrome f (320 aa).

Residues 1 to 35 (MQTINTFSWINQRITRSISVLLLVYIITRTSISSA) form the signal peptide. Residues Tyr-36, Cys-56, Cys-59, and His-60 each contribute to the heme site. Residues 286–306 (VQGLLFFLASVILAQIFLVLK) traverse the membrane as a helical segment.

It belongs to the cytochrome f family. The 4 large subunits of the cytochrome b6-f complex are cytochrome b6, subunit IV (17 kDa polypeptide, petD), cytochrome f and the Rieske protein, while the 4 small subunits are PetG, PetL, PetM and PetN. The complex functions as a dimer. Heme is required as a cofactor.

The protein localises to the plastid thylakoid membrane. Component of the cytochrome b6-f complex, which mediates electron transfer between photosystem II (PSII) and photosystem I (PSI), cyclic electron flow around PSI, and state transitions. This chain is Cytochrome f, found in Cuscuta exaltata (Tall dodder).